The primary structure comprises 202 residues: UDP-N-acetylglucosamine transferase subunit ALG13 (202 aa).

It belongs to the glycosyltransferase 28 family. In terms of assembly, heterodimer with ALG14 to form a functional enzyme.

It localises to the endoplasmic reticulum. It catalyses the reaction an N-acetyl-alpha-D-glucosaminyl-diphospho-di-trans,poly-cis-dolichol + UDP-N-acetyl-alpha-D-glucosamine = an N,N'-diacetylchitobiosyl-diphospho-di-trans,poly-cis-dolichol + UDP + H(+). Involved in protein N-glycosylation. Essential for the second step of the dolichol-linked oligosaccharide pathway. In Saccharomyces cerevisiae (strain ATCC 204508 / S288c) (Baker's yeast), this protein is UDP-N-acetylglucosamine transferase subunit ALG13 (ALG13).